The chain runs to 320 residues: Methionyl-tRNA formyltransferase (320 aa).

Residue 114–117 coordinates (6S)-5,6,7,8-tetrahydrofolate; the sequence is SLLP.

The protein belongs to the Fmt family.

It catalyses the reaction L-methionyl-tRNA(fMet) + (6R)-10-formyltetrahydrofolate = N-formyl-L-methionyl-tRNA(fMet) + (6S)-5,6,7,8-tetrahydrofolate + H(+). In terms of biological role, attaches a formyl group to the free amino group of methionyl-tRNA(fMet). The formyl group appears to play a dual role in the initiator identity of N-formylmethionyl-tRNA by promoting its recognition by IF2 and preventing the misappropriation of this tRNA by the elongation apparatus. The protein is Methionyl-tRNA formyltransferase of Acinetobacter baumannii (strain ACICU).